A 395-amino-acid chain; its full sequence is ATP-dependent RNA helicase eIF4A (395 aa).

The Q motif signature appears at 22–50; that stretch reads TSFDDLGLKDELLRGIYGYGFENPSSIQQ. In terms of domain architecture, Helicase ATP-binding spans 53 to 223; it reads ILPVIKGNDV…GKFMRDPVRI (171 aa). Position 66-73 (66-73) interacts with ATP; that stretch reads AQSGTGKT. The DEAD box signature appears at 171 to 174; sequence DEAD. Positions 234-395 constitute a Helicase C-terminal domain; sequence GIKQFYIDVE…EMPTNIADLI (162 aa).

Belongs to the DEAD box helicase family. eIF4A subfamily. In terms of assembly, component of the eIF4F complex, which composition varies with external and internal environmental conditions. It is composed of at least eIF4A, eIF4E and eIF4G.

It localises to the cytoplasm. The enzyme catalyses ATP + H2O = ADP + phosphate + H(+). Its function is as follows. ATP-dependent RNA helicase which is a subunit of the eIF4F complex involved in cap recognition and is required for mRNA binding to ribosome. In the current model of translation initiation, eIF4A unwinds RNA secondary structures in the 5'-UTR of mRNAs which is necessary to allow efficient binding of the small ribosomal subunit, and subsequent scanning for the initiator codon. This chain is ATP-dependent RNA helicase eIF4A (TIF1), found in Yarrowia lipolytica (strain CLIB 122 / E 150) (Yeast).